The chain runs to 482 residues: Glutamate--tRNA ligase 1 (482 aa).

Residues 18–28 (PSPTGYLHLGG) carry the 'HIGH' region motif. A 'KMSKS' region motif is present at residues 252 to 256 (KLSKR). K255 serves as a coordination point for ATP.

The protein belongs to the class-I aminoacyl-tRNA synthetase family. Glutamate--tRNA ligase type 1 subfamily. In terms of assembly, monomer.

The protein localises to the cytoplasm. The enzyme catalyses tRNA(Glu) + L-glutamate + ATP = L-glutamyl-tRNA(Glu) + AMP + diphosphate. In terms of biological role, catalyzes the attachment of glutamate to tRNA(Glu) in a two-step reaction: glutamate is first activated by ATP to form Glu-AMP and then transferred to the acceptor end of tRNA(Glu). The chain is Glutamate--tRNA ligase 1 from Erythrobacter litoralis (strain HTCC2594).